Reading from the N-terminus, the 98-residue chain is MEIKVTEIRENKLLGRKEIYFDIIHEGEPTPSREAVKGKLAAMLDLDPNTMVLQYIRSYFGSHVSKGYAKAYETRERMLYIEPEYILLRDGLIQKEEE.

This sequence belongs to the eukaryotic ribosomal protein eS24 family.

The protein is Small ribosomal subunit protein eS24 of Thermococcus gammatolerans (strain DSM 15229 / JCM 11827 / EJ3).